The sequence spans 92 residues: Acyl-CoA-binding domain-containing protein 6 (92 aa).

Residues 3–88 (LKEEFEEHAE…VKQLLEVAAS (86 aa)) form the ACB domain. An acyl-CoA-binding positions include 30-34 (YGLYK), lysine 52, lysine 56, and tyrosine 75.

Belongs to the ACBP family. In terms of assembly, interacts with PDLP8. As to expression, mostly expressed in seeds, stems, and siliques, and, to a lower extent, in leaves, flowers, and roots (at protein level). Highly expressed in root and shoot phloem companion cells.

The protein resides in the cytoplasm. Its subcellular location is the cell membrane. Binds medium- and long-chain acyl-CoA esters with very high affinity. May function as an intracellular carrier of acyl-CoA esters. Confers resistance to cold and freezing. Interacts with phosphatidylcholine and derivatives, but not phosphatidic acid and lysophosphatidylcholine. May be involved in phospholipid metabolism. The sequence is that of Acyl-CoA-binding domain-containing protein 6 (ACBP6) from Arabidopsis thaliana (Mouse-ear cress).